Consider the following 672-residue polypeptide: tRNA 5-methylaminomethyl-2-thiouridine biosynthesis bifunctional protein MnmC (672 aa).

The interval 1 to 243 (MTSITHAELG…KREMIAGCME (243 aa)) is tRNA (mnm(5)s(2)U34)-methyltransferase. The tract at residues 269-672 (IGGGIASAAL…LRKGKAITEL (404 aa)) is FAD-dependent cmnm(5)s(2)U34 oxidoreductase.

It in the N-terminal section; belongs to the methyltransferase superfamily. tRNA (mnm(5)s(2)U34)-methyltransferase family. In the C-terminal section; belongs to the DAO family. It depends on FAD as a cofactor.

It is found in the cytoplasm. It carries out the reaction 5-aminomethyl-2-thiouridine(34) in tRNA + S-adenosyl-L-methionine = 5-methylaminomethyl-2-thiouridine(34) in tRNA + S-adenosyl-L-homocysteine + H(+). In terms of biological role, catalyzes the last two steps in the biosynthesis of 5-methylaminomethyl-2-thiouridine (mnm(5)s(2)U) at the wobble position (U34) in tRNA. Catalyzes the FAD-dependent demodification of cmnm(5)s(2)U34 to nm(5)s(2)U34, followed by the transfer of a methyl group from S-adenosyl-L-methionine to nm(5)s(2)U34, to form mnm(5)s(2)U34. The polypeptide is tRNA 5-methylaminomethyl-2-thiouridine biosynthesis bifunctional protein MnmC (Vibrio vulnificus (strain YJ016)).